The chain runs to 246 residues: Protein phosphatase PhpP (246 aa).

Residues 2–240 (EISLLTDVGQ…DNITVALVSM (239 aa)) form the PPM-type phosphatase domain. Mn(2+)-binding residues include aspartate 36, glycine 37, aspartate 192, and aspartate 231.

It belongs to the PP2C family. It depends on Mn(2+) as a cofactor.

The protein localises to the cytoplasm. It carries out the reaction O-phospho-L-seryl-[protein] + H2O = L-seryl-[protein] + phosphate. The enzyme catalyses O-phospho-L-threonyl-[protein] + H2O = L-threonyl-[protein] + phosphate. Protein phosphatase able to dephosphorylate StkP-P and other phosphorylated protein substrates. PhpP and its cognate protein kinase StkP appear to constitute a functional signaling couple in vivo, PhpP's primary role being probably to control phosphorylation levels of StkP and of its targets. PhpP thus performs an essential control of StkP activity. Also dephosphorylates DivIVA in vivo. This Streptococcus pneumoniae serotype 2 (strain D39 / NCTC 7466) protein is Protein phosphatase PhpP (phpP).